Reading from the N-terminus, the 215-residue chain is MATQTNQDHFSGDLRRSWQKIGKLTYGSRQWIVMMASRSAVLKKMLESDEFKTSAKQVGTITLLEMKQEELEAFVEFLYSDGSMLSSKVKQHARALYRAADKYEILRLRELCRSELISSLNSTNSLNLLELAQIPFDKVLNDAALSYIKTNELMFPSFDEFKLFVDNYPNLAVEVMMASLTRTPSTSCSRCGLITYHNQTGTSCCSCGFDYPRRS.

One can recognise a BTB domain in the interval 17-87; the sequence is SWQKIGKLTY…LYSDGSMLSS (71 aa).

It functions in the pathway protein modification; protein ubiquitination. Its function is as follows. May act as a substrate-specific adapter of an E3 ubiquitin-protein ligase complex (CUL3-RBX1-BTB) which mediates the ubiquitination and subsequent proteasomal degradation of target proteins. The sequence is that of Putative BTB/POZ domain-containing protein At2g05330 from Arabidopsis thaliana (Mouse-ear cress).